A 91-amino-acid polypeptide reads, in one-letter code: ATP-dependent Clp protease adapter protein ClpS (91 aa).

It belongs to the ClpS family. In terms of assembly, binds to the N-terminal domain of the chaperone ClpA.

Involved in the modulation of the specificity of the ClpAP-mediated ATP-dependent protein degradation. The polypeptide is ATP-dependent Clp protease adapter protein ClpS (Helicobacter pylori (strain ATCC 700392 / 26695) (Campylobacter pylori)).